The sequence spans 149 residues: Large ribosomal subunit protein uL15 (149 aa).

Basic residues-rich tracts occupy residues 1-13 and 21-42; these read MPTR…KHRG and RIGK…HHHR. A disordered region spans residues 1–44; that stretch reads MPTRLTKTRKHRGNVSAGKGRIGKHRKHPGGRGKAGGQHHHRTN.

The protein belongs to the universal ribosomal protein uL15 family. In terms of assembly, component of the large ribosomal subunit. Mature ribosomes consist of a small (40S) and a large (60S) subunit. The 40S subunit contains about 32 different proteins and 1 molecule of RNA (18S). The 60S subunit contains 45 different proteins and 3 molecules of RNA (25S, 5.8S and 5S).

It localises to the cytoplasm. In terms of biological role, component of the ribosome, a large ribonucleoprotein complex responsible for the synthesis of proteins in the cell. The small ribosomal subunit (SSU) binds messenger RNAs (mRNAs) and translates the encoded message by selecting cognate aminoacyl-transfer RNA (tRNA) molecules. The large subunit (LSU) contains the ribosomal catalytic site termed the peptidyl transferase center (PTC), which catalyzes the formation of peptide bonds, thereby polymerizing the amino acids delivered by tRNAs into a polypeptide chain. The nascent polypeptides leave the ribosome through a tunnel in the LSU and interact with protein factors that function in enzymatic processing, targeting, and the membrane insertion of nascent chains at the exit of the ribosomal tunnel. This chain is Large ribosomal subunit protein uL15, found in Candida albicans (strain SC5314 / ATCC MYA-2876) (Yeast).